A 906-amino-acid polypeptide reads, in one-letter code: Microtubule-associated protein 6 (906 aa).

The segment at 1 to 15 (MAWPCITRACCIARF) is calmodulin-binding. Residues cysteine 5, cysteine 10, and cysteine 11 are each lipidated (S-palmitoyl cysteine). Disordered stretches follow at residues 37–56 (TEHP…ALAP), 65–411 (TQPA…RAVA), 441–651 (KPVK…GPVK), 674–782 (NKDS…TAPR), and 817–906 (AKDQ…EGSP). Pro residues predominate over residues 41-50 (GAPPQPPAPL). Residues 93-117 (AAPGRSGLGLGAASASTSGSGPADS) show a composition bias toward low complexity. Serine 98 is modified (phosphoserine). Residues 116 to 139 (DSVMRQDYRAWKVQRPEPSCRPRS) are mn 1. Residues 119–139 (MRQDYRAWKVQRPEPSCRPRS) show a composition bias toward basic and acidic residues. A calmodulin-binding region spans residues 124–138 (RAWKVQRPEPSCRPR). A Phosphotyrosine modification is found at tyrosine 141. A compositionally biased stretch (basic and acidic residues) spans 147–171 (PFERETQYQKDFRAWPLPRRGDHPW). The interval 151–174 (ETQYQKDFRAWPLPRRGDHPWIPK) is mn 2. The segment at 160–174 (AWPLPRRGDHPWIPK) is calmodulin-binding. The residue at position 185 (serine 185) is a Phosphoserine. The calmodulin-binding stretch occupies residues 187-201 (PVLGVPKRRPQSQER). At serine 207 the chain carries Phosphoserine. A Mc-1 repeat occupies 222–267 (LAAGKASGVDQRDTRRKAGPAWMVTRNEGHEEKPLPPAQSQTQEGG). Residues 222 to 405 (LAAGKASGVD…HAQGTGPEGG (184 aa)) are 4 X approximate tandem repeat Mc. Calmodulin-binding regions lie at residues 235 to 249 (TRRK…TRNE), 280 to 294 (DTRR…VTRS), 325 to 339 (RDTR…MVTR), 375 to 389 (RKAG…SEGH), 435 to 449 (RAWT…IKAK), 486 to 500 (RRRI…FKEC), and 513 to 527 (PKKT…RKAK). The stretch at 268 to 313 (PAAGKASGADQRDTRRKAGPAWMVTRSEGHEEKPLPPAQSQTQEGG) is one Mc-2 repeat. The Mc-3 repeat unit spans residues 314 to 359 (PAAGKASGADQRDTRRKAGPAWMVTRTEGHEETPLPPAQSQTQEGG). The stretch at 360 to 405 (PAAGKASGADERDTRRKAGPAWMVRRSEGHEQTPAAHAQGTGPEGG) is one Mc-4 repeat. The tract at residues 427-450 (SSSYRNEFRAWTDIKPVKPIKAKP) is mn 3. The segment covering 496 to 505 (PFKECPKVEK) has biased composition (basic and acidic residues). A compositionally biased stretch (basic residues) spans 512-527 (KPKKTSTSHKPPRKAK). Over residues 549–573 (KPDDKEQSKEMNNKLAEAKESRVKP) the composition is skewed to basic and acidic residues. Serine 632 and serine 687 each carry phosphoserine. Positions 695–711 (KNQSPVVPASTKDQSFP) are enriched in polar residues. A compositionally biased stretch (basic and acidic residues) spans 715–742 (PRKDPGPVIPEPEKDRAPTVPERRKDQH). Phosphoserine is present on serine 905.

This sequence belongs to the STOP family. In terms of assembly, interacts with calmodulin (via C-terminus); the interaction is dependent on Ca(2+). Interacts (via C-terminus) with TMEM106B (via N-terminus). Interacts with ZDHHC13 (via ANK repeats). Interacts with ZDHHC17 (via ANK repeats). Palmitoylated. Probably depalmitoylated by ABHD17A, ABHD17B and ABHD17C. During neuronal polarization, palmitoylation and depalmitoylation cycles regulate MAP6 shuttling between secretory vesicles and microtubules, and its polarized distribution in the axon. Isoform 1 is specifically expressed in adult brain. Isoform 2 is predominantly expressed in embryonic brain; expression persists at low levels in the adult brain. Isoform 3 is expressed at high levels in lung and at lower levels in testis, heart, muscle and kidney (at protein level). Oligodendrocytes express a major isoform of 89 kDa (O-STOP). Astrocytes also express an isoform of 60 kDa (A-STOP).

It localises to the cytoplasm. The protein resides in the cytoskeleton. Its subcellular location is the golgi apparatus. The protein localises to the cell projection. It is found in the axon. It localises to the dendrite. The protein resides in the cytoplasmic vesicle. Its subcellular location is the secretory vesicle membrane. Its function is as follows. Involved in microtubule stabilization in many cell types, including neuronal cells. Specifically has microtubule cold stabilizing activity. Involved in dendrite morphogenesis and maintenance by regulating lysosomal trafficking via its interaction with TMEM106B. Regulates KIF5A-mediated axonal cargo transport. Regulates axonal growth during neuron polarization. The polypeptide is Microtubule-associated protein 6 (Map6) (Mus musculus (Mouse)).